Here is a 376-residue protein sequence, read N- to C-terminus: Flap endonuclease 1 (376 aa).

Residues 1-105 (MGIKGLSKLL…GELNKRKENA (105 aa)) form an N-domain region. Aspartate 34 lines the Mg(2+) pocket. The DNA site is built by arginine 47 and arginine 71. Aspartate 87, glutamate 159, glutamate 161, aspartate 180, and aspartate 182 together coordinate Mg(2+). Positions 123–254 (QAKKLMKRTA…ITAFELIQQY (132 aa)) are I-domain. Glutamate 159 is a DNA binding site. Positions 232 and 234 each coordinate DNA. A Mg(2+)-binding site is contributed by aspartate 234. An interaction with PCNA region spans residues 336–344 (AQGRLDSFF). A disordered region spans residues 352 to 376 (SKSEAASGVKRKKPTTKAKESRKKK). The span at 360–376 (VKRKKPTTKAKESRKKK) shows a compositional bias: basic residues.

The protein belongs to the XPG/RAD2 endonuclease family. FEN1 subfamily. As to quaternary structure, interacts with PCNA. Three molecules of FEN1 bind to one PCNA trimer with each molecule binding to one PCNA monomer. PCNA stimulates the nuclease activity without altering cleavage specificity. Requires Mg(2+) as cofactor. Phosphorylated. Phosphorylation upon DNA damage induces relocalization to the nuclear plasma.

It is found in the nucleus. It localises to the nucleolus. Its subcellular location is the nucleoplasm. The protein resides in the mitochondrion. In terms of biological role, structure-specific nuclease with 5'-flap endonuclease and 5'-3' exonuclease activities involved in DNA replication and repair. During DNA replication, cleaves the 5'-overhanging flap structure that is generated by displacement synthesis when DNA polymerase encounters the 5'-end of a downstream Okazaki fragment. It enters the flap from the 5'-end and then tracks to cleave the flap base, leaving a nick for ligation. Also involved in the long patch base excision repair (LP-BER) pathway, by cleaving within the apurinic/apyrimidinic (AP) site-terminated flap. Acts as a genome stabilization factor that prevents flaps from equilibrating into structures that lead to duplications and deletions. Also possesses 5'-3' exonuclease activity on nicked or gapped double-stranded DNA, and exhibits RNase H activity. Also involved in replication and repair of rDNA and in repairing mitochondrial DNA. This Entamoeba dispar (strain ATCC PRA-260 / SAW760) protein is Flap endonuclease 1.